We begin with the raw amino-acid sequence, 498 residues long: UDP-N-acetylmuramate--L-alanine ligase (498 aa).

An ATP-binding site is contributed by 133–139 (GSSGKTT).

Belongs to the MurCDEF family.

The protein resides in the cytoplasm. The catalysed reaction is UDP-N-acetyl-alpha-D-muramate + L-alanine + ATP = UDP-N-acetyl-alpha-D-muramoyl-L-alanine + ADP + phosphate + H(+). It participates in cell wall biogenesis; peptidoglycan biosynthesis. Functionally, cell wall formation. The polypeptide is UDP-N-acetylmuramate--L-alanine ligase (Wolbachia pipientis wMel).